The following is a 194-amino-acid chain: dTTP/UTP pyrophosphatase (194 aa).

Asp-69 functions as the Proton acceptor in the catalytic mechanism.

Belongs to the Maf family. YhdE subfamily. Requires a divalent metal cation as cofactor.

It is found in the cytoplasm. The catalysed reaction is dTTP + H2O = dTMP + diphosphate + H(+). The enzyme catalyses UTP + H2O = UMP + diphosphate + H(+). Nucleoside triphosphate pyrophosphatase that hydrolyzes dTTP and UTP. May have a dual role in cell division arrest and in preventing the incorporation of modified nucleotides into cellular nucleic acids. The protein is dTTP/UTP pyrophosphatase of Moorella thermoacetica (strain ATCC 39073 / JCM 9320).